Here is an 87-residue protein sequence, read N- to C-terminus: Co-chaperonin GroES (87 aa).

It belongs to the GroES chaperonin family. Heptamer of 7 subunits arranged in a ring. Interacts with the chaperonin GroEL.

It localises to the cytoplasm. In terms of biological role, together with the chaperonin GroEL, plays an essential role in assisting protein folding. The GroEL-GroES system forms a nano-cage that allows encapsulation of the non-native substrate proteins and provides a physical environment optimized to promote and accelerate protein folding. GroES binds to the apical surface of the GroEL ring, thereby capping the opening of the GroEL channel. This chain is Co-chaperonin GroES, found in Campylobacter hominis (strain ATCC BAA-381 / DSM 21671 / CCUG 45161 / LMG 19568 / NCTC 13146 / CH001A).